The following is a 111-amino-acid chain: UPF0060 membrane protein XAC3064 (111 aa).

Transmembrane regions (helical) follow at residues 8-28, 32-52, 64-84, and 91-111; these read LLLF…PYLW, GGSV…VWLL, AAYG…VDGV, and LLGA…PRSA.

This sequence belongs to the UPF0060 family.

The protein resides in the cell inner membrane. The sequence is that of UPF0060 membrane protein XAC3064 from Xanthomonas axonopodis pv. citri (strain 306).